The following is an 830-amino-acid chain: Periplasmic nitrate reductase 2 (830 aa).

A signal peptide (tat-type signal) is located at residues 1–31 (MKVSRRKFIKAQAVASAAAAAGISIPISASN). Residues 41–97 (ITWEKAPCRFCGTGCSVNVGTKEGKVVATHGDIKSPVNRGLNCVKGYFLSKIMYGKD) form the 4Fe-4S Mo/W bis-MGD-type domain. Cys48, Cys51, Cys55, and Cys83 together coordinate [4Fe-4S] cluster. Residues Lys85, Gln152, Asn177, Cys181, 245–249 (STFEH), 264–266 (QSD), Met374, Gln378, Asn484, 510–511 (SE), Lys533, Asp560, and 720–729 (TGRVIEHWHS) contribute to the Mo-bis(molybdopterin guanine dinucleotide) site. Substrate is bound at residue Trp796. Mo-bis(molybdopterin guanine dinucleotide) contacts are provided by Asn804 and Lys821.

The protein belongs to the prokaryotic molybdopterin-containing oxidoreductase family. NasA/NapA/NarB subfamily. Component of the periplasmic nitrate reductase NapAB complex composed of NapA and NapB. Requires [4Fe-4S] cluster as cofactor. Mo-bis(molybdopterin guanine dinucleotide) is required as a cofactor. In terms of processing, predicted to be exported by the Tat system. The position of the signal peptide cleavage has not been experimentally proven.

Its subcellular location is the periplasm. The catalysed reaction is 2 Fe(II)-[cytochrome] + nitrate + 2 H(+) = 2 Fe(III)-[cytochrome] + nitrite + H2O. Functionally, catalytic subunit of the periplasmic nitrate reductase complex NapAB. Receives electrons from NapB and catalyzes the reduction of nitrate to nitrite. This chain is Periplasmic nitrate reductase 2, found in Photobacterium profundum (strain SS9).